The chain runs to 664 residues: Intraflagellar transport protein 70A (664 aa).

TPR repeat units lie at residues 11–44 (DGEF…SPRS), 45–78 (RAGL…HPEL), 153–186 (LDGQ…SGYR), 188–220 (DLSY…GIRQ), 392–423 (LTKQ…EKYI), 424–456 (PVLM…CNDH), and 458–491 (VWKL…HYDN). The stretch at 507–534 (YIMTSQNEEAEELMRKIEKEEEQLSYDD) forms a coiled coil. A TPR 8 repeat occupies 543-576 (CIVNLVIGTLYCAKGNYDFGISRVIKSLEPYNKK).

This sequence belongs to the TTC30/dfy-1/fleer family.

The protein localises to the cell projection. Its subcellular location is the cilium. Its function is as follows. Required for polyglutamylation of axonemal tubulin. Plays a role in anterograde intraflagellar transport (IFT), the process by which cilia precursors are transported from the base of the cilium to the site of their incorporation at the tip. The protein is Intraflagellar transport protein 70A (IFT70A) of Bos taurus (Bovine).